We begin with the raw amino-acid sequence, 427 residues long: Serine hydroxymethyltransferase (427 aa).

Residues Leu122 and 126–128 (GHL) each bind (6S)-5,6,7,8-tetrahydrofolate. At Lys231 the chain carries N6-(pyridoxal phosphate)lysine.

The protein belongs to the SHMT family. Homodimer. Pyridoxal 5'-phosphate serves as cofactor.

Its subcellular location is the cytoplasm. It carries out the reaction (6R)-5,10-methylene-5,6,7,8-tetrahydrofolate + glycine + H2O = (6S)-5,6,7,8-tetrahydrofolate + L-serine. It participates in one-carbon metabolism; tetrahydrofolate interconversion. The protein operates within amino-acid biosynthesis; glycine biosynthesis; glycine from L-serine: step 1/1. In terms of biological role, catalyzes the reversible interconversion of serine and glycine with tetrahydrofolate (THF) serving as the one-carbon carrier. This reaction serves as the major source of one-carbon groups required for the biosynthesis of purines, thymidylate, methionine, and other important biomolecules. Also exhibits THF-independent aldolase activity toward beta-hydroxyamino acids, producing glycine and aldehydes, via a retro-aldol mechanism. The polypeptide is Serine hydroxymethyltransferase (Acidobacterium capsulatum (strain ATCC 51196 / DSM 11244 / BCRC 80197 / JCM 7670 / NBRC 15755 / NCIMB 13165 / 161)).